The primary structure comprises 671 residues: Phospholipid:diacylglycerol acyltransferase 1 (671 aa).

The disordered stretch occupies residues 1 to 46; it reads MPLIHRKKPTEKPSTPPSEEVVHDEDSQKKPHESSKSHHKKSNGGG. The Cytoplasmic segment spans residues 1 to 54; it reads MPLIHRKKPTEKPSTPPSEEVVHDEDSQKKPHESSKSHHKKSNGGGKWSCIDSC. Residues 20 to 36 are compositionally biased toward basic and acidic residues; the sequence is EVVHDEDSQKKPHESSK. A helical membrane pass occupies residues 55–75; it reads CWFIGCVCVTWWFLLFLYNAM. Over 76–671 the chain is Lumenal; that stretch reads PASFPQYVTE…EWSERIDLKL (596 aa). Asn-161 is a glycosylation site (N-linked (GlcNAc...) asparagine). The active-site Acyl-ester intermediate is Ser-254. Residues Asn-381 and Asn-434 are each glycosylated (N-linked (GlcNAc...) asparagine). Catalysis depends on charge relay system residues Asp-573 and His-626. N-linked (GlcNAc...) asparagine glycosylation is present at Asn-647.

It belongs to the AB hydrolase superfamily. Lipase family. Ubiquitous. Highest expression in young developing seeds.

The protein resides in the membrane. It catalyses the reaction a glycerophospholipid + a 1,2-diacyl-sn-glycerol = a monoacylglycerophospholipid + a triacyl-sn-glycerol. It participates in glycerolipid metabolism; triacylglycerol biosynthesis. Functionally, triacylglycerol formation by an acyl-CoA independent pathway. The enzyme preferentially transfers acyl groups from the sn-2 position of a phospholipid to diacylglycerol, thus forming an sn-1-lysophospholipid. Involved in epoxy and hydroxy fatty acid accumulation in seeds. Has complementary functions with DAG1 that are essential for triacylglycerol synthesis and normal development of both seeds and pollen. The protein is Phospholipid:diacylglycerol acyltransferase 1 (PDAT1) of Arabidopsis thaliana (Mouse-ear cress).